Reading from the N-terminus, the 329-residue chain is Phytochromobilin:ferredoxin oxidoreductase, chloroplastic (329 aa).

The N-terminal 45 residues, 1 to 45 (MALSMEFGFSIGSCFKAPNPPVLISASPNKINFTLRRRKKRFLLR), are a transit peptide targeting the chloroplast.

This sequence belongs to the HY2 family.

The protein localises to the plastid. It is found in the chloroplast. The catalysed reaction is (3Z)-phytochromobilin + 2 oxidized [2Fe-2S]-[ferredoxin] = biliverdin IXalpha + 2 reduced [2Fe-2S]-[ferredoxin] + 2 H(+). In terms of biological role, catalyzes the two-electron reduction of biliverdin IX-alpha to the tetrapyrrole chromophore phytochromobilin (PPhiB). This is Phytochromobilin:ferredoxin oxidoreductase, chloroplastic from Arabidopsis thaliana (Mouse-ear cress).